The primary structure comprises 116 residues: Promotilin (116 aa).

Positions 1–25 are cleaved as a signal peptide; sequence MVSRKAVAVLLMVHVAVMLASQTEA. The tract at residues 39–74 is disordered; that stretch reads REKERNKGQKKSLIVQQRSEEVGPLDPVEPPEEEEN.

Belongs to the motilin family.

The protein localises to the secreted. In terms of biological role, plays an important role in the regulation of interdigestive gastrointestinal motility and indirectly causes rhythmic contraction of duodenal and colonic smooth muscle. The protein is Promotilin (MLN) of Felis catus (Cat).